The chain runs to 122 residues: Large ribosomal subunit protein eL18 (122 aa).

Belongs to the eukaryotic ribosomal protein eL18 family.

The chain is Large ribosomal subunit protein eL18 from Thermoplasma volcanium (strain ATCC 51530 / DSM 4299 / JCM 9571 / NBRC 15438 / GSS1).